The primary structure comprises 563 residues: Arginine--tRNA ligase (563 aa).

The 'HIGH' region motif lies at 121–131; it reads PNIAKPFSIGH.

The protein belongs to the class-I aminoacyl-tRNA synthetase family. Monomer.

The protein localises to the cytoplasm. It catalyses the reaction tRNA(Arg) + L-arginine + ATP = L-arginyl-tRNA(Arg) + AMP + diphosphate. The protein is Arginine--tRNA ligase of Streptococcus pyogenes serotype M18 (strain MGAS8232).